The following is a 249-amino-acid chain: Probable transcriptional regulatory protein FN1661 (249 aa).

The span at 1–10 shows a compositional bias: polar residues; sequence MSGHSKWNNI. Residues 1 to 20 form a disordered region; it reads MSGHSKWNNIQHRKGAQDKK.

This sequence belongs to the TACO1 family.

The protein localises to the cytoplasm. This is Probable transcriptional regulatory protein FN1661 from Fusobacterium nucleatum subsp. nucleatum (strain ATCC 25586 / DSM 15643 / BCRC 10681 / CIP 101130 / JCM 8532 / KCTC 2640 / LMG 13131 / VPI 4355).